Reading from the N-terminus, the 71-residue chain is Small ribosomal subunit protein bS18 (71 aa).

This sequence belongs to the bacterial ribosomal protein bS18 family. In terms of assembly, part of the 30S ribosomal subunit. Forms a tight heterodimer with protein bS6.

Functionally, binds as a heterodimer with protein bS6 to the central domain of the 16S rRNA, where it helps stabilize the platform of the 30S subunit. This Acaryochloris marina (strain MBIC 11017) protein is Small ribosomal subunit protein bS18.